Here is a 452-residue protein sequence, read N- to C-terminus: Bifunctional protein GlmU (452 aa).

Positions 1–226 (MNFSAVILAA…PIEVEGVNDR (226 aa)) are pyrophosphorylase. UDP-N-acetyl-alpha-D-glucosamine is bound by residues 8 to 11 (LAAG), Lys-22, Gln-73, 78 to 79 (GT), 100 to 102 (YGD), Gly-137, Glu-151, Asn-166, and Asn-224. Residue Asp-102 participates in Mg(2+) binding. Residue Asn-224 coordinates Mg(2+). A linker region spans residues 227–247 (AQLARLERAYQAAQAQKLLEQ). Residues 248-452 (GVMLRDPSRF…IANWQRPTKK (205 aa)) are N-acetyltransferase. Positions 330 and 348 each coordinate UDP-N-acetyl-alpha-D-glucosamine. Residue His-360 is the Proton acceptor of the active site. The UDP-N-acetyl-alpha-D-glucosamine site is built by Tyr-363 and Asn-374. Acetyl-CoA contacts are provided by residues Ala-377, 383 to 384 (NY), Ser-402, Ala-420, and Arg-437.

The protein in the N-terminal section; belongs to the N-acetylglucosamine-1-phosphate uridyltransferase family. In the C-terminal section; belongs to the transferase hexapeptide repeat family. Homotrimer. Mg(2+) serves as cofactor.

Its subcellular location is the cytoplasm. It carries out the reaction alpha-D-glucosamine 1-phosphate + acetyl-CoA = N-acetyl-alpha-D-glucosamine 1-phosphate + CoA + H(+). The enzyme catalyses N-acetyl-alpha-D-glucosamine 1-phosphate + UTP + H(+) = UDP-N-acetyl-alpha-D-glucosamine + diphosphate. It participates in nucleotide-sugar biosynthesis; UDP-N-acetyl-alpha-D-glucosamine biosynthesis; N-acetyl-alpha-D-glucosamine 1-phosphate from alpha-D-glucosamine 6-phosphate (route II): step 2/2. The protein operates within nucleotide-sugar biosynthesis; UDP-N-acetyl-alpha-D-glucosamine biosynthesis; UDP-N-acetyl-alpha-D-glucosamine from N-acetyl-alpha-D-glucosamine 1-phosphate: step 1/1. Its pathway is bacterial outer membrane biogenesis; LPS lipid A biosynthesis. Catalyzes the last two sequential reactions in the de novo biosynthetic pathway for UDP-N-acetylglucosamine (UDP-GlcNAc). The C-terminal domain catalyzes the transfer of acetyl group from acetyl coenzyme A to glucosamine-1-phosphate (GlcN-1-P) to produce N-acetylglucosamine-1-phosphate (GlcNAc-1-P), which is converted into UDP-GlcNAc by the transfer of uridine 5-monophosphate (from uridine 5-triphosphate), a reaction catalyzed by the N-terminal domain. The polypeptide is Bifunctional protein GlmU (Aliivibrio fischeri (strain MJ11) (Vibrio fischeri)).